The following is a 141-amino-acid chain: uncharacterized protein (141 aa).

Helical transmembrane passes span 20–42 (FLVNLPVVICLAAYLVSQVFCLA) and 52–74 (LHLCTFFTFFTSFLLVPLAIFTL).

The protein resides in the cell membrane. This is an uncharacterized protein from Archaeoglobus fulgidus (strain ATCC 49558 / DSM 4304 / JCM 9628 / NBRC 100126 / VC-16).